We begin with the raw amino-acid sequence, 535 residues long: Dimethylaniline monooxygenase [N-oxide-forming] 2 (535 aa).

An N-acetylalanine modification is found at Ala-2. FAD-binding positions include 9-13 (GAGVS), Glu-32, 40-41 (VW), and 61-62 (NT). NADP(+) contacts are provided by residues 60 to 61 (TN) and 195 to 198 (SGSD). Residue Lys-492 forms a Glycyl lysine isopeptide (Lys-Gly) (interchain with G-Cter in SUMO) linkage. Residues 510–530 (FPVSFLLKILGLVAVVVAFFC) form a helical membrane-spanning segment.

This sequence belongs to the FMO family. The cofactor is FAD. Mg(2+) is required as a cofactor.

The protein localises to the microsome membrane. The protein resides in the endoplasmic reticulum membrane. The enzyme catalyses N,N-dimethylaniline + NADPH + O2 + H(+) = N,N-dimethylaniline N-oxide + NADP(+) + H2O. Catalyzes the oxidative metabolism of numerous xenobiotics, including mainly therapeutic drugs and insecticides that contain a soft nucleophile, most commonly nitrogen and sulfur and participates to their bioactivation. The chain is Dimethylaniline monooxygenase [N-oxide-forming] 2 from Macaca mulatta (Rhesus macaque).